A 244-amino-acid polypeptide reads, in one-letter code: 5-oxoprolinase subunit A (244 aa).

It belongs to the LamB/PxpA family. Forms a complex composed of PxpA, PxpB and PxpC.

The catalysed reaction is 5-oxo-L-proline + ATP + 2 H2O = L-glutamate + ADP + phosphate + H(+). Its function is as follows. Catalyzes the cleavage of 5-oxoproline to form L-glutamate coupled to the hydrolysis of ATP to ADP and inorganic phosphate. In Salmonella agona (strain SL483), this protein is 5-oxoprolinase subunit A.